We begin with the raw amino-acid sequence, 73 residues long: DNA-directed RNA polymerase subunit epsilon (73 aa).

Belongs to the RNA polymerase subunit epsilon family. In terms of assembly, RNAP is composed of a core of 2 alpha, a beta and a beta' subunit. The core is associated with a delta subunit, and at least one of epsilon or omega. When a sigma factor is associated with the core the holoenzyme is formed, which can initiate transcription.

It carries out the reaction RNA(n) + a ribonucleoside 5'-triphosphate = RNA(n+1) + diphosphate. Its function is as follows. A non-essential component of RNA polymerase (RNAP). This chain is DNA-directed RNA polymerase subunit epsilon, found in Lactobacillus helveticus (strain DPC 4571).